The chain runs to 410 residues: Killer cell immunoglobulin-like receptor 3DL3 (410 aa).

The N-terminal stretch at 1-25 is a signal peptide; that stretch reads MSLMVVSMACVGFFLLEGPWPHVGG. The Extracellular portion of the chain corresponds to 26 to 322; sequence QDKPFLSAWP…VSVTGNSRHL (297 aa). 3 Ig-like C2-type domains span residues 42 to 97, 137 to 197, and 237 to 295; these read GQHV…RCCS, GETV…RCFG, and GENV…RCFG. Cystine bridges form between Cys49–Cys95 and Cys144–Cys195. 3 N-linked (GlcNAc...) asparagine glycosylation sites follow: Asn179, Asn239, and Asn273. An intrachain disulfide couples Cys244 to Cys293. The helical transmembrane segment at 323 to 343 threads the bilayer; that stretch reads HVLIGTSVVIIPFAILLFFLL. Topologically, residues 344–410 are cytoplasmic; that stretch reads HRWCANKKNA…PKTPPTDTSV (67 aa).

This sequence belongs to the immunoglobulin superfamily.

It localises to the cell membrane. Functionally, receptor on natural killer cells. May inhibit the activity of NK cells thus preventing cell lysis. This chain is Killer cell immunoglobulin-like receptor 3DL3 (KIR3DL3), found in Homo sapiens (Human).